Reading from the N-terminus, the 199-residue chain is Prolactin (199 aa).

Residues cysteine 4 and cysteine 11 are joined by a disulfide bond. Phosphoserine is present on residues serine 26, serine 34, and serine 90. 2 disulfide bridges follow: cysteine 58–cysteine 174 and cysteine 191–cysteine 199.

Belongs to the somatotropin/prolactin family. In terms of assembly, interacts with PRLR.

Its subcellular location is the secreted. Functionally, prolactin acts primarily on the mammary gland by promoting lactation. The protein is Prolactin (PRL) of Balaenoptera borealis (Sei whale).